Here is a 640-residue protein sequence, read N- to C-terminus: Zinc finger protein 549 (640 aa).

The region spanning 27–140 (VTFEDIAVYF…PYTSVASGKW (114 aa)) is the KRAB domain. The segment at 217-241 (FQQRRYKCEQVFNEKVHVTEHQRVH) adopts a C2H2-type 1; degenerate zinc-finger fold. K223 is covalently cross-linked (Glycyl lysine isopeptide (Lys-Gly) (interchain with G-Cter in SUMO2)). The C2H2-type 2; degenerate zinc-finger motif lies at 247–269 (YKRREYGKSLNSKYLFVEHQRTH). C2H2-type zinc fingers lie at residues 275–298 (YVCN…QRIH), 304–326 (YVCI…QRTH), 332–355 (YVCN…QRIH), 361–383 (YVCM…QRVH), 389–411 (YQCS…HRIH), 417–439 (YECK…QRIH), 445–467 (YVCI…QRIH), 473–495 (YECS…HKIH), 501–523 (YECS…QRIH), 529–551 (CECN…QKVH), 557–579 (CECS…QKVH), 585–607 (YNCT…QRIH), and 613–635 (YECG…QKVH).

The protein belongs to the krueppel C2H2-type zinc-finger protein family.

Its subcellular location is the nucleus. Its function is as follows. May be involved in transcriptional regulation. In Homo sapiens (Human), this protein is Zinc finger protein 549 (ZNF549).